Here is a 435-residue protein sequence, read N- to C-terminus: GTPase Der (435 aa).

2 EngA-type G domains span residues asparagine 8–asparagine 169 and phenylalanine 176–serine 351. Residues glycine 14–serine 21, aspartate 61–isoleucine 65, asparagine 123–aspartate 126, glycine 182–serine 189, aspartate 229–isoleucine 233, and asparagine 294–aspartate 297 contribute to the GTP site. One can recognise a KH-like domain in the interval arginine 352–lysine 435.

The protein belongs to the TRAFAC class TrmE-Era-EngA-EngB-Septin-like GTPase superfamily. EngA (Der) GTPase family. In terms of assembly, associates with the 50S ribosomal subunit.

GTPase that plays an essential role in the late steps of ribosome biogenesis. This is GTPase Der from Mycoplasmopsis pulmonis (strain UAB CTIP) (Mycoplasma pulmonis).